A 77-amino-acid chain; its full sequence is Conotoxin ArMKLT2-0251 (77 aa).

The signal sequence occupies residues 1 to 22; it reads MKLTCVLIVAVLILTACQLIAA. Positions 23-46 are excised as a propeptide; sequence DDSRDLKRFSRRKMRDGMLNTKNM. Gln49 carries the post-translational modification Pyrrolidone carboxylic acid. Intrachain disulfides connect Cys50–Cys65, Cys57–Cys68, and Cys64–Cys73.

It belongs to the conotoxin O1 superfamily. Expressed by the venom duct.

The protein resides in the secreted. The polypeptide is Conotoxin ArMKLT2-0251 (Conus arenatus (Sand-dusted cone)).